Reading from the N-terminus, the 145-residue chain is Hemoglobin subunit beta (145 aa).

Residues 1–145 enclose the Globin domain; the sequence is MLTAEEKAAV…VANALAHRYH (145 aa). Thr-11 carries the phosphothreonine modification. The residue at position 43 (Ser-43) is a Phosphoserine. Lys-58 is subject to N6-acetyllysine. His-62 is a heme b binding site. The residue at position 81 (Lys-81) is an N6-acetyllysine. His-91 is a heme b binding site. Cys-92 carries the post-translational modification S-nitrosocysteine.

The protein belongs to the globin family. In terms of assembly, heterotetramer of two alpha chains and two beta chains. In terms of tissue distribution, red blood cells.

In terms of biological role, involved in oxygen transport from the lung to the various peripheral tissues. Functionally, functions as an endogenous inhibitor of enkephalin-degrading enzymes such as DPP3, and may thereby play a role as a regulator of pain and inflammation. This Bos taurus (Bovine) protein is Hemoglobin subunit beta (HBB).